The primary structure comprises 325 residues: Glutarate 2-hydroxylase (325 aa).

The Fe cation site is built by H160, D162, and H292.

It belongs to the glutarate hydroxylase family. Homotetramer. The cofactor is Fe(2+).

The catalysed reaction is glutarate + 2-oxoglutarate + O2 = (S)-2-hydroxyglutarate + succinate + CO2. Its pathway is amino-acid degradation. Functionally, acts as an alpha-ketoglutarate-dependent dioxygenase catalyzing hydroxylation of glutarate (GA) to L-2-hydroxyglutarate (L2HG). Functions in a L-lysine degradation pathway that proceeds via cadaverine, glutarate and L-2-hydroxyglutarate. Is extremely specific for glutarate, but it can use both 2-oxoglutarate and 2-oxoadipate (2OA) as a cosubstrate for L2HG formation. In Pseudomonas putida (strain ATCC 47054 / DSM 6125 / CFBP 8728 / NCIMB 11950 / KT2440), this protein is Glutarate 2-hydroxylase.